Reading from the N-terminus, the 337-residue chain is Dihydroorotate dehydrogenase (quinone) (337 aa).

FMN contacts are provided by residues 61 to 65 (AGLDK) and T85. K65 serves as a coordination point for substrate. Residue 110–114 (NRMGF) participates in substrate binding. FMN-binding residues include N138 and N171. N171 lines the substrate pocket. S174 acts as the Nucleophile in catalysis. Substrate is bound at residue N176. Residues K216 and T244 each coordinate FMN. 245-246 (NT) is a binding site for substrate. Residues G267, G296, and 317 to 318 (YS) contribute to the FMN site.

This sequence belongs to the dihydroorotate dehydrogenase family. Type 2 subfamily. As to quaternary structure, monomer. FMN serves as cofactor.

It is found in the cell membrane. It catalyses the reaction (S)-dihydroorotate + a quinone = orotate + a quinol. The protein operates within pyrimidine metabolism; UMP biosynthesis via de novo pathway; orotate from (S)-dihydroorotate (quinone route): step 1/1. In terms of biological role, catalyzes the conversion of dihydroorotate to orotate with quinone as electron acceptor. The chain is Dihydroorotate dehydrogenase (quinone) from Thiobacillus denitrificans (strain ATCC 25259 / T1).